The primary structure comprises 305 residues: Ornithine carbamoyltransferase (305 aa).

Residues 52–55, Gln79, Arg103, and 130–133 each bind carbamoyl phosphate; these read STRT and HPLQ. L-ornithine is bound by residues Asn162, Asp224, and 228-229; that span reads SM. Carbamoyl phosphate-binding positions include 264–265 and Arg292; that span reads CL.

It belongs to the aspartate/ornithine carbamoyltransferase superfamily. OTCase family.

The protein resides in the cytoplasm. The enzyme catalyses carbamoyl phosphate + L-ornithine = L-citrulline + phosphate + H(+). It functions in the pathway amino-acid biosynthesis; L-arginine biosynthesis; L-arginine from L-ornithine and carbamoyl phosphate: step 1/3. Its function is as follows. Reversibly catalyzes the transfer of the carbamoyl group from carbamoyl phosphate (CP) to the N(epsilon) atom of ornithine (ORN) to produce L-citrulline. The polypeptide is Ornithine carbamoyltransferase (Pyrobaculum aerophilum (strain ATCC 51768 / DSM 7523 / JCM 9630 / CIP 104966 / NBRC 100827 / IM2)).